A 422-amino-acid polypeptide reads, in one-letter code: L-threonine dehydratase biosynthetic IlvA (422 aa).

Residue Lys56 is modified to N6-(pyridoxal phosphate)lysine. Residues Asn83, Gly189–Leu193, and Ser315 each bind pyridoxal 5'-phosphate. The ACT-like domain occupies His339–Glu413.

It belongs to the serine/threonine dehydratase family. As to quaternary structure, homotetramer. The cofactor is pyridoxal 5'-phosphate.

It carries out the reaction L-threonine = 2-oxobutanoate + NH4(+). The protein operates within amino-acid biosynthesis; L-isoleucine biosynthesis; 2-oxobutanoate from L-threonine: step 1/1. Functionally, catalyzes the anaerobic formation of alpha-ketobutyrate and ammonia from threonine in a two-step reaction. The first step involved a dehydration of threonine and a production of enamine intermediates (aminocrotonate), which tautomerizes to its imine form (iminobutyrate). Both intermediates are unstable and short-lived. The second step is the nonenzymatic hydrolysis of the enamine/imine intermediates to form 2-ketobutyrate and free ammonia. In the low water environment of the cell, the second step is accelerated by RidA. In Staphylococcus aureus (strain NCTC 8325 / PS 47), this protein is L-threonine dehydratase biosynthetic IlvA (ilvA).